The primary structure comprises 95 residues: Cell division topological specificity factor (95 aa).

The protein belongs to the MinE family.

Its function is as follows. Prevents the cell division inhibition by proteins MinC and MinD at internal division sites while permitting inhibition at polar sites. This ensures cell division at the proper site by restricting the formation of a division septum at the midpoint of the long axis of the cell. The chain is Cell division topological specificity factor from Trichodesmium erythraeum (strain IMS101).